The following is a 497-amino-acid chain: O-acetyltransferase PaAT-1 (497 aa).

N-linked (GlcNAc...) asparagine glycosylation is present at Asn35. The next 9 membrane-spanning stretches (helical) occupy residues Gly69–Ile89, Leu107–Ser127, Leu157–Tyr177, Leu241–Phe261, Val278–Ile298, Ala329–Phe349, Pro375–Phe395, Ile406–Gly426, and Val443–Val463.

This sequence belongs to the acyltransferase 3 family.

It is found in the membrane. The protein operates within mycotoxin biosynthesis. Functionally, O-acetyltransferase; part of the 2 gene clusters that mediate the biosynthesis of fusicoccins, diterpene glucosides that display phytohormone-like activity and function as potent activators of plasma membrane H(+)-ATPases in plants by modifying 14-3-3 proteins and cause the plant disease constriction canker. The first step in the pathway is performed by the fusicoccadiene synthase PaFS that possesses both prenyl transferase and terpene cyclase activity, converting isopentenyl diphosphate and dimethylallyl diphosphate into geranylgeranyl diphosphate (GGDP) and successively converting GGDP into fusicocca-2,10(14)-diene, a precursor for fusicoccin H. The second step is the oxidation at the C-8 position by the cytochrome P450 monooxygenase PaP450-2 to yield fusicocca-2,10(14)-diene-8-beta-ol. The cytochrome P450 monooxygenase PaP450-1 then catalyzes the hydroxylation at the C-16 position to produce fusicocca-2,10(14)-diene-8-beta,16-diol. The dioxygenase fc-dox then catalyzes the 16-oxydation of fusicocca-2,10(14)-diene-8-beta,16-diol to yield an aldehyde (8-beta-hydroxyfusicocca-1,10(14)-dien-16-al). The short-chain dehydrogenase/reductase fc-sdr catalyzes the reduction of the aldehyde to yield fusicocca-1,10(14)-diene-8-beta,16-diol. The next step is the hydroxylation at C-9 performed by the cytochrome P450 monooxygenase PaP450-3 that leads to fusicoccin H aglycon which is glycosylated to fusicoccin H by the O-glycosyltransferase PaGT. Hydroxylation at C-12 by the cytochrome P450 monooxygenase PaP450-4 leads then to the production of fusicoccin Q and is followed by methylation by the O-methyltransferase PaMT to yield fusicoccin P. Fusicoccin P is further converted to fusicoccin J via prenylation by the O-glucose prenyltransferase PaPT. Cytochrome P450 monooxygenase PaP450-5 then performs hydroxylation at C-19 to yield dideacetyl-fusicoccin A which is acetylated to 3'-O-deacetyl-fusicoccin A by the O-acetyltransferase PaAT-2. Finally, a another acetylation by the O-acetyltransferase PaAT-1 yields fusicoccin A. This is O-acetyltransferase PaAT-1 from Phomopsis amygdali (Fusicoccum amygdali).